The chain runs to 613 residues: MPKYRSSTTTQGRNMAGARSLWKATGMTDLDFKKPIIAVVNSFTEFVPGHIHLRNLGKLISSEIKLTGGVAKEFNTIAIDDGIAMGHSGMLYSLPSRELIADSIEYMINAHCADAMICISNCDKITPGMLMAALRLNIPCIFISGGPMESGKIFINEKEIKIDLIDAIKYSADPNSADDLVNQIEDSSCPTCGSCSGLFTANSMNCLTEALGLSLPGNGTLLATHVDRKKLFIQAGRLIVKITKDYYKNNNENLLPRNIASRQSFLNAMSLDIAMGGSTNTILHLLAIAKEGNIDFTMSDIDSLSKKVPHLCKISPNSTTYHMEDFHRAGGVMGLLAELNRINLLNKNINNVLGLNLETTLNIYDILTTKDKNIINMFRAGPFGKKTIIPFTQSYRWPKLDKDRQKGCIRSYEFAFSNDGGLAILYGNIAKNGCVVKTAGVKKDNLIFTGNAIVFESQEDAVRAILEGKIQKGHVIVIRYEGPKGGPGMQEMLYPTTYLKSMGLDQHCALITDGRFSGGTSGLSIGHISPEAASKGNIALIKNSDCININIPDRIIHLDITNDELLLRIENENKKGSLSYTPLYRQRYVSPALKMYAFFAMSADKGAVRKIRF.

Position 81 (Asp-81) interacts with Mg(2+). Position 122 (Cys-122) interacts with [2Fe-2S] cluster. Residues Asp-123 and Lys-124 each contribute to the Mg(2+) site. An N6-carboxylysine modification is found at Lys-124. Cys-195 provides a ligand contact to [2Fe-2S] cluster. Glu-491 provides a ligand contact to Mg(2+). Ser-517 serves as the catalytic Proton acceptor.

This sequence belongs to the IlvD/Edd family. In terms of assembly, homodimer. The cofactor is [2Fe-2S] cluster. Mg(2+) serves as cofactor.

It carries out the reaction (2R)-2,3-dihydroxy-3-methylbutanoate = 3-methyl-2-oxobutanoate + H2O. The enzyme catalyses (2R,3R)-2,3-dihydroxy-3-methylpentanoate = (S)-3-methyl-2-oxopentanoate + H2O. Its pathway is amino-acid biosynthesis; L-isoleucine biosynthesis; L-isoleucine from 2-oxobutanoate: step 3/4. It participates in amino-acid biosynthesis; L-valine biosynthesis; L-valine from pyruvate: step 3/4. Functionally, functions in the biosynthesis of branched-chain amino acids. Catalyzes the dehydration of (2R,3R)-2,3-dihydroxy-3-methylpentanoate (2,3-dihydroxy-3-methylvalerate) into 2-oxo-3-methylpentanoate (2-oxo-3-methylvalerate) and of (2R)-2,3-dihydroxy-3-methylbutanoate (2,3-dihydroxyisovalerate) into 2-oxo-3-methylbutanoate (2-oxoisovalerate), the penultimate precursor to L-isoleucine and L-valine, respectively. This chain is Dihydroxy-acid dehydratase, found in Buchnera aphidicola subsp. Melaphis rhois.